Here is a 515-residue protein sequence, read N- to C-terminus: Interferon-induced, double-stranded RNA-activated protein kinase (515 aa).

Position 2 is an N-acetylalanine (alanine 2). The region spanning 8-76 is the DRBM 1 domain; sequence FYMDKLNKYR…AKLAVDILDN (69 aa). Lysine 68 participates in a covalent cross-link: Glycyl lysine isopeptide (Lys-Gly) (interchain with G-Cter in ISG15). Residue threonine 84 is modified to Phosphothreonine. The DRBM 2 domain occupies 95-162; sequence NYIGLVNSFA…AKEAYQKLLK (68 aa). A Phosphotyrosine; by autocatalysis modification is found at tyrosine 96. Lysine 154 participates in a covalent cross-link: Glycyl lysine isopeptide (Lys-Gly) (interchain with G-Cter in ISG15). Tyrosine 157 is subject to Phosphotyrosine; by autocatalysis. Residues 204-224 are disordered; the sequence is ENVFTNGLGENKRKSGVKVSP. Residue threonine 233 is modified to Phosphothreonine. Residues 241-515 form an interaction with TRAF5 region; the sequence is DFEDIEEIGL…ISEKKKRNTC (275 aa). The Protein kinase domain maps to 242–504; the sequence is FEDIEEIGLG…EILKTLAEWR (263 aa). Residue 248-256 participates in ATP binding; that stretch reads IGLGGFGQV. Tyrosine 268 bears the Phosphotyrosine; by autocatalysis mark. Lysine 271 provides a ligand contact to ATP. Aspartate 376 acts as the Proton acceptor in catalysis. Residues threonine 409 and threonine 414 each carry the phosphothreonine; by autocatalysis modification. Phosphoserine is present on serine 419.

Belongs to the protein kinase superfamily. Ser/Thr protein kinase family. GCN2 subfamily. As to quaternary structure, homodimer. Interacts with DNAJC3 and STRBP. Forms a complex with FANCA, FANCC, FANCG and HSP70. Interacts with ADAR/ADAR1. The inactive form interacts with NCK1. Interacts (via the kinase catalytic domain) with STAT3 (via SH2 domain), TRAF2 (C-terminus), TRAF5 (C-terminus) and TRAF6 (C-terminus). Interacts with MAP2K6, TARBP2, NLRP1, NLRC4 and AIM2. Interacts (via DRBM 1 domain) with DUS2L (via DRBM domain). Interacts with DHX9 (via N-terminus) and this interaction is dependent upon activation of the kinase. The inactive form interacts with GSN. Interacts with IKBKB/IKKB, NPM1, NLRP3 and IRS1. Post-translationally, autophosphorylated on several Ser, Thr and Tyr residues. Autophosphorylation of Thr-414 is dependent on Thr-409 and is stimulated by dsRNA binding and dimerization. Autophosphorylation apparently leads to the activation of the kinase. Tyrosine autophosphorylation is essential for efficient dsRNA-binding, dimerization, and kinase activation. In terms of tissue distribution, expressed in heart, lung, brain, kidney, testes, thymus and bone marrow.

It localises to the cytoplasm. The protein resides in the nucleus. Its subcellular location is the perinuclear region. It catalyses the reaction L-seryl-[protein] + ATP = O-phospho-L-seryl-[protein] + ADP + H(+). It carries out the reaction L-threonyl-[protein] + ATP = O-phospho-L-threonyl-[protein] + ADP + H(+). The catalysed reaction is L-tyrosyl-[protein] + ATP = O-phospho-L-tyrosyl-[protein] + ADP + H(+). Its activity is regulated as follows. Initially produced in an inactive form and is activated by binding to viral dsRNA, which causes dimerization and autophosphorylation in the activation loop and stimulation of function. ISGylation can activate it in the absence of viral infection. Can also be activated by heparin, pro-inflammatory stimuli, growth factors, cytokines, oxidative stress and the cellular protein PRKRA. Activity is markedly stimulated by manganese ions. Activation is blocked by the cellular proteins TARBP2, DUS2L, NPM1, NCK1 and ADAR. Functionally, IFN-induced dsRNA-dependent serine/threonine-protein kinase that phosphorylates the alpha subunit of eukaryotic translation initiation factor 2 (EIF2S1/eIF-2-alpha) and plays a key role in the innate immune response to viral infection. Inhibits viral replication via the integrated stress response (ISR): EIF2S1/eIF-2-alpha phosphorylation in response to viral infection converts EIF2S1/eIF-2-alpha in a global protein synthesis inhibitor, resulting to a shutdown of cellular and viral protein synthesis, while concomitantly initiating the preferential translation of ISR-specific mRNAs, such as the transcriptional activator ATF4. Exerts its antiviral activity on a wide range of DNA and RNA viruses including west nile virus (WNV), sindbis virus (SV), foot-and-mouth virus (FMDV), semliki Forest virus (SFV) and lymphocytic choriomeningitis virus (LCMV). Also involved in the regulation of signal transduction, apoptosis, cell proliferation and differentiation: phosphorylates other substrates including p53/TP53, PPP2R5A, DHX9, ILF3, and IRS1. In addition to serine/threonine-protein kinase activity, also has tyrosine-protein kinase activity and phosphorylates CDK1 at 'Tyr-4' upon DNA damage, facilitating its ubiquitination and proteasomal degradation. Either as an adapter protein and/or via its kinase activity, can regulate various signaling pathways (p38 MAP kinase, NF-kappa-B and insulin signaling pathways) and transcription factors (JUN, STAT1, STAT3, IRF1, ATF3) involved in the expression of genes encoding pro-inflammatory cytokines and IFNs. Activates the NF-kappa-B pathway via interaction with IKBKB and TRAF family of proteins and activates the p38 MAP kinase pathway via interaction with MAP2K6. Can act as both a positive and negative regulator of the insulin signaling pathway (ISP). Negatively regulates ISP by inducing the inhibitory phosphorylation of insulin receptor substrate 1 (IRS1) at 'Ser-312' and positively regulates ISP via phosphorylation of PPP2R5A which activates FOXO1, which in turn up-regulates the expression of insulin receptor substrate 2 (IRS2). Can regulate NLRP3 inflammasome assembly and the activation of NLRP3, NLRP1, AIM2 and NLRC4 inflammasomes. Plays a role in the regulation of the cytoskeleton by binding to gelsolin (GSN), sequestering the protein in an inactive conformation away from actin. The polypeptide is Interferon-induced, double-stranded RNA-activated protein kinase (Eif2ak2) (Mus musculus (Mouse)).